Reading from the N-terminus, the 65-residue chain is Large ribosomal subunit protein bL33m (65 aa).

It belongs to the bacterial ribosomal protein bL33 family. As to quaternary structure, component of the mitochondrial ribosome large subunit (39S) which comprises a 16S rRNA and about 50 distinct proteins.

It is found in the mitochondrion. The chain is Large ribosomal subunit protein bL33m (mRpL33) from Anopheles gambiae (African malaria mosquito).